A 144-amino-acid polypeptide reads, in one-letter code: 3-dehydroquinate dehydratase (144 aa).

Catalysis depends on tyrosine 24, which acts as the Proton acceptor. Residues asparagine 73, histidine 79, and aspartate 86 each coordinate substrate. Histidine 99 functions as the Proton donor in the catalytic mechanism. Substrate is bound by residues leucine 100–serine 101 and arginine 110.

It belongs to the type-II 3-dehydroquinase family. Homododecamer.

It catalyses the reaction 3-dehydroquinate = 3-dehydroshikimate + H2O. Its pathway is metabolic intermediate biosynthesis; chorismate biosynthesis; chorismate from D-erythrose 4-phosphate and phosphoenolpyruvate: step 3/7. Its function is as follows. Catalyzes a trans-dehydration via an enolate intermediate. The chain is 3-dehydroquinate dehydratase from Shewanella putrefaciens (strain CN-32 / ATCC BAA-453).